We begin with the raw amino-acid sequence, 246 residues long: Myelin protein P0 (246 aa).

Residues 1 to 27 (MFRDLKPAYLFCCSVLYAFSVLRPSQG) form the signal peptide. The Ig-like V-type domain occupies 28–143 (ISVSTHHNLH…VGTSSDVHLT (116 aa)). At 28 to 150 (ISVSTHHNLH…HLTVYDKIPP (123 aa)) the chain is on the extracellular side. Residues Cys48 and Cys125 are joined by a disulfide bond. An N-linked (GlcNAc...) (complex) asparagine glycan is attached at Asn120. The chain crosses the membrane as a helical span at residues 151–178 (VGAGVVSGAIIGTFLGIILLIVGGLYLF). Over 179 to 246 (RYIVRRRARS…KLSESKRDKK (68 aa)) the chain is Cytoplasmic. Positions 200 to 246 (AERGKVSGKAGTVSKGPVLYATLDQSKSGKGASEKKSKLSESKRDKK) are disordered. The segment covering 231–246 (ASEKKSKLSESKRDKK) has biased composition (basic and acidic residues).

Belongs to the myelin P0 protein family. Post-translationally, N-glycan is sulfated. Found only in peripheral nervous system Schwann cells.

The protein localises to the cell membrane. Creation of an extracellular membrane face which guides the wrapping process and ultimately compacts adjacent lamellae. This Heterodontus francisci (Horn shark) protein is Myelin protein P0 (mpz).